Consider the following 80-residue polypeptide: Small ribosomal subunit protein uS17 (80 aa).

It belongs to the universal ribosomal protein uS17 family. In terms of assembly, part of the 30S ribosomal subunit.

In terms of biological role, one of the primary rRNA binding proteins, it binds specifically to the 5'-end of 16S ribosomal RNA. This is Small ribosomal subunit protein uS17 from Cereibacter sphaeroides (strain ATCC 17025 / ATH 2.4.3) (Rhodobacter sphaeroides).